A 367-amino-acid polypeptide reads, in one-letter code: Glutamate 5-kinase (367 aa).

Residue lysine 8 coordinates ATP. Substrate-binding residues include serine 49, aspartate 136, and asparagine 148. ATP-binding positions include 168–169 (TD) and 210–216 (TGGMVTK). A PUA domain is found at 275–353 (AGKLYLDEGA…REISTILGYA (79 aa)).

The protein belongs to the glutamate 5-kinase family.

It is found in the cytoplasm. It carries out the reaction L-glutamate + ATP = L-glutamyl 5-phosphate + ADP. Its pathway is amino-acid biosynthesis; L-proline biosynthesis; L-glutamate 5-semialdehyde from L-glutamate: step 1/2. Catalyzes the transfer of a phosphate group to glutamate to form L-glutamate 5-phosphate. This chain is Glutamate 5-kinase, found in Nostoc punctiforme (strain ATCC 29133 / PCC 73102).